We begin with the raw amino-acid sequence, 232 residues long: Putative homeobox protein NANOG2 (232 aa).

The tract at residues 1–39 (MDLPIQDSHDSSTSPKGKQPTTAEKSATKKEDKVPVKKQ) is disordered. The segment covering 11–25 (SSTSPKGKQPTTAEK) has biased composition (polar residues). A compositionally biased stretch (basic and acidic residues) spans 26-35 (SATKKEDKVP). 8 consecutive repeat copies span residues 123 to 127 (WSNQT), 128 to 132 (WNNST), 133 to 137 (WSNQT), 143 to 147 (WSNHS), 148 to 152 (WNTQT), 153 to 157 (WCTQS), 158 to 162 (WNNQA), and 163 to 167 (WNSPF). The interval 123–167 (WSNQTWNNSTWSNQTQNIQSWSNHSWNTQTWCTQSWNNQAWNSPF) is 8 X repeats starting with a Trp in each unit. The interval 123 to 167 (WSNQTWNNSTWSNQTQNIQSWSNHSWNTQTWCTQSWNNQAWNSPF) is sufficient for transactivation activity. The sufficient for strong transactivation activity stretch occupies residues 168 to 232 (YNCGEESLQS…YSMNMQPEDV (65 aa)).

Belongs to the Nanog homeobox family.

The protein localises to the nucleus. In terms of biological role, probable transcriptional regulator. The polypeptide is Putative homeobox protein NANOG2 (NANOGP1) (Homo sapiens (Human)).